Reading from the N-terminus, the 247-residue chain is Uridylate kinase (247 aa).

Residue 16–19 (KLSG) coordinates ATP. G58 provides a ligand contact to UMP. ATP-binding residues include G59 and R63. Residues D78 and 139 to 146 (TGNPFFTT) contribute to the UMP site. Residues T166, Y172, and D175 each coordinate ATP.

Belongs to the UMP kinase family. In terms of assembly, homohexamer.

The protein localises to the cytoplasm. It carries out the reaction UMP + ATP = UDP + ADP. Its pathway is pyrimidine metabolism; CTP biosynthesis via de novo pathway; UDP from UMP (UMPK route): step 1/1. Its activity is regulated as follows. Inhibited by UTP. Catalyzes the reversible phosphorylation of UMP to UDP. The chain is Uridylate kinase from Xylella fastidiosa (strain 9a5c).